Consider the following 1843-residue polypeptide: Cilia- and flagella-associated protein 44 (1843 aa).

Residues 1–86 (MKEPDDQDTS…PPVEVKEEPE (86 aa)) are disordered. A compositionally biased stretch (polar residues) spans 29–39 (LKSSQDTTADS). Over residues 41 to 58 (TDGEESYLGDDLDLDDMD) the composition is skewed to acidic residues. 7 WD repeats span residues 214-255 (GAEK…PILR), 258-297 (AFSQ…TGLK), 308-346 (TSTS…VELC), 353-390 (CHSG…TADV), 456-495 (FHSG…PLVH), 497-541 (KFKQ…GLTV), and 561-600 (PHTD…KPIG). A disordered region spans residues 701 to 726 (REAFGEEEIPEEETSEEGEEEEPPLP). Acidic residues predominate over residues 705–724 (GEEEIPEEETSEEGEEEEPP). WD repeat units lie at residues 790–829 (TEDN…PFLV) and 842–881 (NNYG…IVPK). 3 disordered regions span residues 1040–1086 (YSKL…SVLE), 1266–1291 (QRKQ…SAGG), and 1488–1524 (KEVE…DDVF). The span at 1047–1071 (SQSERRQSKMERLEKEGPGKKESQR) shows a compositional bias: basic and acidic residues. Serine 1069 carries the post-translational modification Phosphoserine. The span at 1072–1081 (DTGGSISLQE) shows a compositional bias: polar residues. Positions 1492–1524 (GDADEDEESEESSEEESSLESDEDASGSEDDVF) are enriched in acidic residues. Coiled coils occupy residues 1548–1603 (RLDI…RLNE) and 1631–1665 (LVFS…CRER). Residues 1699 to 1744 (IDLEALQTLSVNTTLEELKIKKLRKELSNAKELRMWEEKIAQVRWD) form a WD 10 repeat.

The protein belongs to the CFAP44 family. As to expression, expressed in testis.

It localises to the cell projection. The protein resides in the cilium. Its subcellular location is the flagellum. The protein localises to the cytoplasm. It is found in the cytoskeleton. It localises to the flagellum axoneme. Flagellar protein involved in sperm flagellum axoneme organization and function. The polypeptide is Cilia- and flagella-associated protein 44 (Mus musculus (Mouse)).